A 486-amino-acid polypeptide reads, in one-letter code: Protein nucleotidyltransferase YdiU (486 aa).

Gly90, Gly92, Arg93, Lys113, Asp125, Gly126, Arg176, and Arg183 together coordinate ATP. The active-site Proton acceptor is Asp252. Mg(2+) is bound by residues Asn253 and Asp262. Residue Asp262 coordinates ATP.

Belongs to the SELO family. Mg(2+) serves as cofactor. It depends on Mn(2+) as a cofactor.

The enzyme catalyses L-seryl-[protein] + ATP = 3-O-(5'-adenylyl)-L-seryl-[protein] + diphosphate. It catalyses the reaction L-threonyl-[protein] + ATP = 3-O-(5'-adenylyl)-L-threonyl-[protein] + diphosphate. The catalysed reaction is L-tyrosyl-[protein] + ATP = O-(5'-adenylyl)-L-tyrosyl-[protein] + diphosphate. It carries out the reaction L-histidyl-[protein] + UTP = N(tele)-(5'-uridylyl)-L-histidyl-[protein] + diphosphate. The enzyme catalyses L-seryl-[protein] + UTP = O-(5'-uridylyl)-L-seryl-[protein] + diphosphate. It catalyses the reaction L-tyrosyl-[protein] + UTP = O-(5'-uridylyl)-L-tyrosyl-[protein] + diphosphate. Nucleotidyltransferase involved in the post-translational modification of proteins. It can catalyze the addition of adenosine monophosphate (AMP) or uridine monophosphate (UMP) to a protein, resulting in modifications known as AMPylation and UMPylation. In Pseudomonas putida (strain ATCC 47054 / DSM 6125 / CFBP 8728 / NCIMB 11950 / KT2440), this protein is Protein nucleotidyltransferase YdiU.